Reading from the N-terminus, the 71-residue chain is Putative antitoxin VapB15 (71 aa).

Belongs to the UPF0330 family.

In terms of biological role, possibly the antitoxin component of a type II toxin-antitoxin (TA) system. Its cognate toxin is VapC15 (Potential). The chain is Putative antitoxin VapB15 (vapB15) from Archaeoglobus fulgidus (strain ATCC 49558 / DSM 4304 / JCM 9628 / NBRC 100126 / VC-16).